The chain runs to 216 residues: 3-isopropylmalate dehydratase small subunit (216 aa).

This sequence belongs to the LeuD family. LeuD type 1 subfamily. As to quaternary structure, heterodimer of LeuC and LeuD.

It carries out the reaction (2R,3S)-3-isopropylmalate = (2S)-2-isopropylmalate. It functions in the pathway amino-acid biosynthesis; L-leucine biosynthesis; L-leucine from 3-methyl-2-oxobutanoate: step 2/4. In terms of biological role, catalyzes the isomerization between 2-isopropylmalate and 3-isopropylmalate, via the formation of 2-isopropylmaleate. This is 3-isopropylmalate dehydratase small subunit from Burkholderia mallei (strain NCTC 10247).